The following is a 130-amino-acid chain: Hypocretin neuropeptide precursor (130 aa).

The first 32 residues, 1 to 32 (MNPPSTKVPWAAVTLLLLLLLPPALLSPGAAA), serve as a signal peptide directing secretion. Residue glutamine 33 is modified to Pyrrolidone carboxylic acid. Disulfide bonds link cysteine 38/cysteine 44 and cysteine 39/cysteine 46. Leucine amide is present on leucine 65. The residue at position 96 (methionine 96) is a Methionine amide. Residues 97-130 (GRRAGAEPAPRPCPGRRCPVVAVPSAAPGGRSGV) constitute a propeptide, removed in mature form.

Belongs to the orexin family. In terms of processing, specific enzymatic cleavages at paired basic residues yield the different active peptides.

The protein localises to the rough endoplasmic reticulum. Its subcellular location is the cytoplasmic vesicle. It localises to the synapse. Neuropeptides that play a significant role in the regulation of food intake and sleep-wakefulness, possibly by coordinating the complex behavioral and physiologic responses of these complementary homeostatic functions. A broader role in the homeostatic regulation of energy metabolism, autonomic function, hormonal balance and the regulation of body fluids, is also suggested. Functionally, binds to orexin receptors HCRTR1/OX1R and HCRTR2/OX2R with a high affinity. Stimulates food intake. Modulates pituitary luteinizing hormone secretion in an ovarian steroid-dependent manner. In terms of biological role, binds to orexin receptor HCRTR2/OX2R only. Stimulates food intake. Modulates pituitary luteinizing hormone secretion in an ovarian steroid-dependent manner. The protein is Hypocretin neuropeptide precursor (HCRT) of Canis lupus familiaris (Dog).